Reading from the N-terminus, the 298-residue chain is Acetyl-coenzyme A carboxylase carboxyl transferase subunit beta (298 aa).

Residues 41–298 (PTIECPECHA…RIVSKLMNLP (258 aa)) enclose the CoA carboxyltransferase N-terminal domain. Zn(2+) contacts are provided by Cys-45, Cys-48, Cys-64, and Cys-67. A C4-type zinc finger spans residues 45 to 67 (CPECHALVTRTAIAFNAYVCPSC).

It belongs to the AccD/PCCB family. As to quaternary structure, acetyl-CoA carboxylase is a heterohexamer composed of biotin carboxyl carrier protein (AccB), biotin carboxylase (AccC) and two subunits each of ACCase subunit alpha (AccA) and ACCase subunit beta (AccD). Zn(2+) serves as cofactor.

It localises to the cytoplasm. The enzyme catalyses N(6)-carboxybiotinyl-L-lysyl-[protein] + acetyl-CoA = N(6)-biotinyl-L-lysyl-[protein] + malonyl-CoA. The protein operates within lipid metabolism; malonyl-CoA biosynthesis; malonyl-CoA from acetyl-CoA: step 1/1. Functionally, component of the acetyl coenzyme A carboxylase (ACC) complex. Biotin carboxylase (BC) catalyzes the carboxylation of biotin on its carrier protein (BCCP) and then the CO(2) group is transferred by the transcarboxylase to acetyl-CoA to form malonyl-CoA. This Acinetobacter baylyi (strain ATCC 33305 / BD413 / ADP1) protein is Acetyl-coenzyme A carboxylase carboxyl transferase subunit beta.